A 112-amino-acid chain; its full sequence is Cornifelin homolog (112 aa).

It belongs to the cornifelin family.

The protein is Cornifelin homolog (cnfn) of Danio rerio (Zebrafish).